The sequence spans 529 residues: Probable E3 ubiquitin-protein ligase MGRN1 (529 aa).

The RING-type zinc-finger motif lies at 275-314 (ECVVCLSDLRDTLILPCRHLCLCNACADTLRYQANNCPIC). 2 disordered regions span residues 341–362 (SPVL…IPPG) and 396–529 (EMGD…VEEC). Composition is skewed to polar residues over residues 449-463 (AQPQ…SPSE) and 477-487 (NSGSESRSLGV). Positions 501 to 511 (SSLSQSESDPS) are enriched in low complexity. Over residues 520–529 (ESWSTAVEEC) the composition is skewed to polar residues.

Post-translationally, autoubiquitinated in vitro.

It catalyses the reaction S-ubiquitinyl-[E2 ubiquitin-conjugating enzyme]-L-cysteine + [acceptor protein]-L-lysine = [E2 ubiquitin-conjugating enzyme]-L-cysteine + N(6)-ubiquitinyl-[acceptor protein]-L-lysine.. It functions in the pathway protein modification; protein ubiquitination. In terms of biological role, E3 ubiquitin-protein ligase. Also acts as a negative regulator of hedgehog signaling. The protein is Probable E3 ubiquitin-protein ligase MGRN1 (mgrn1) of Danio rerio (Zebrafish).